The primary structure comprises 793 residues: Caldesmon (793 aa).

At R12 the chain carries Phosphoserine. A Phosphotyrosine modification is found at E21. Disordered regions lie at residues 26–94 (AYQR…DDEA), 108–407 (QKRL…IKGE), and 434–458 (KKQG…KPTF). The segment at 26–207 (AYQRNDDDEE…PKRGSIGENQ (182 aa)) is myosin and calmodulin-binding. The segment covering 47 to 56 (QERLRQKQEE) has biased composition (basic and acidic residues). The segment covering 60–74 (GQVTDQVEVNAQNSV) has biased composition (polar residues). Residues 108–122 (QKRLQEALERQKEFD) show a composition bias toward basic and acidic residues. S129 is subject to Phosphoserine. 2 stretches are compositionally biased toward basic and acidic residues: residues 146-162 (TTEK…RYEI) and 173-188 (QKND…KEDK). E196 and S202 each carry phosphoserine. Glycyl lysine isopeptide (Lys-Gly) (interchain with G-Cter in SUMO2) cross-links involve residues I203 and E209. 2 stretches are compositionally biased toward basic and acidic residues: residues 236 to 407 (EEPK…IKGE) and 435 to 458 (KQGE…KPTF). 3 repeat units span residues 319 to 332 (EEEK…QRIK), 333 to 346 (EEEK…QRIK), and 347 to 360 (EEEK…QRIK). The segment at 319–375 (EEEKRAAEERQRIKEEEKRAAEERQRIKEEEKRAAEERQRIKEEEKRAAEERQRARA) is 3 X 14 AA tandem repeats of E-E-E-K-R-A-A-E-E-R-Q-R-I-K. K459 is covalently cross-linked (Glycyl lysine isopeptide (Lys-Gly) (interchain with G-Cter in SUMO2)). The tract at residues 492–640 (KSQNGEFMTH…KKPFKCFTPK (149 aa)) is disordered. Basic and acidic residues-rich tracts occupy residues 532 to 558 (AGKR…KQKQ) and 566 to 633 (EELK…DKKP). Residues 564 to 621 (ELEELKKKREERRKVLEEEEQRRKQEEADRKLREEEEKRRLKEEIERRRAEAAEKRQK) are tropomyosin-binding. A Phosphoserine modification is found at S643. K645 participates in a covalent cross-link: Glycyl lysine isopeptide (Lys-Gly) (interchain with G-Cter in SUMO2). The strong actin-binding stretch occupies residues 653-686 (LNKSVQKSSGVKSTHQAAIVSKIDSRLEQYTSAI). S656 is subject to Phosphoserine. The interval 664–674 (KSTHQAAIVSK) is tropomyosin-binding. Disordered stretches follow at residues 687–706 (EGTK…PVPA), 721–740 (VFSS…GLKV), and 747–793 (NEWL…PTKV). Residues 716-722 (WEKGNVF) form a calmodulin-binding region. The span at 721-733 (VFSSPTAAGTPNK) shows a compositional bias: polar residues. S724 carries the post-translational modification Phosphoserine. A phosphothreonine mark is found at T730 and T753. Residue S759 is modified to Phosphoserine. The span at 765 to 784 (SDLRPGDVSSKRNLWEKQSV) shows a compositional bias: basic and acidic residues. The segment at 768–793 (RPGDVSSKRNLWEKQSVDKVTSPTKV) is weak actin-binding. Position 789 is a phosphoserine (S789).

This sequence belongs to the caldesmon family. In non-muscle cells, phosphorylation by CDK1 during mitosis causes caldesmon to dissociate from microfilaments. Phosphorylation reduces caldesmon binding to actin, myosin, and calmodulin as well as its inhibition of actomyosin ATPase activity. Phosphorylation also occurs in both quiescent and dividing smooth muscle cells with similar effects on the interaction with actin and calmodulin and on microfilaments reorganization. CDK1-mediated phosphorylation promotes Schwann cell migration during peripheral nerve regeneration. As to expression, high-molecular-weight caldesmon (isoform 1) is predominantly expressed in smooth muscles, whereas low-molecular-weight caldesmon (isoforms 2, 3, 4 and 5) are widely distributed in non-muscle tissues and cells. Not expressed in skeletal muscle or heart.

It localises to the cytoplasm. The protein localises to the cytoskeleton. Its subcellular location is the myofibril. It is found in the stress fiber. Its function is as follows. Actin- and myosin-binding protein implicated in the regulation of actomyosin interactions in smooth muscle and nonmuscle cells (could act as a bridge between myosin and actin filaments). Stimulates actin binding of tropomyosin which increases the stabilization of actin filament structure. In muscle tissues, inhibits the actomyosin ATPase by binding to F-actin. This inhibition is attenuated by calcium-calmodulin and is potentiated by tropomyosin. Interacts with actin, myosin, two molecules of tropomyosin and with calmodulin. Also plays an essential role during cellular mitosis and receptor capping. Involved in Schwann cell migration during peripheral nerve regeneration. This chain is Caldesmon (CALD1), found in Homo sapiens (Human).